Here is a 337-residue protein sequence, read N- to C-terminus: Ferredoxin--NADP reductase (337 aa).

FAD contacts are provided by Asp-33, Gln-41, Tyr-46, Ala-86, Phe-120, Asp-286, and Thr-327.

It belongs to the ferredoxin--NADP reductase type 2 family. Homodimer. Requires FAD as cofactor.

The enzyme catalyses 2 reduced [2Fe-2S]-[ferredoxin] + NADP(+) + H(+) = 2 oxidized [2Fe-2S]-[ferredoxin] + NADPH. The chain is Ferredoxin--NADP reductase from Rickettsia canadensis (strain McKiel).